Here is a 316-residue protein sequence, read N- to C-terminus: Acetyl-coenzyme A carboxylase carboxyl transferase subunit beta (316 aa).

The 270-residue stretch at 39–308 folds into the CoA carboxyltransferase N-terminal domain; that stretch reads LWHKCSKCGV…TPPMVLWETM (270 aa). 4 residues coordinate Zn(2+): Cys43, Cys46, Cys62, and Cys65. A C4-type zinc finger spans residues 43-65; the sequence is CSKCGVLTYTKDLRANQMVCVEC.

It belongs to the AccD/PCCB family. In terms of assembly, acetyl-CoA carboxylase is a heterohexamer composed of biotin carboxyl carrier protein (AccB), biotin carboxylase (AccC) and two subunits each of ACCase subunit alpha (AccA) and ACCase subunit beta (AccD). Zn(2+) serves as cofactor.

The protein localises to the cytoplasm. It carries out the reaction N(6)-carboxybiotinyl-L-lysyl-[protein] + acetyl-CoA = N(6)-biotinyl-L-lysyl-[protein] + malonyl-CoA. It participates in lipid metabolism; malonyl-CoA biosynthesis; malonyl-CoA from acetyl-CoA: step 1/1. In terms of biological role, component of the acetyl coenzyme A carboxylase (ACC) complex. Biotin carboxylase (BC) catalyzes the carboxylation of biotin on its carrier protein (BCCP) and then the CO(2) group is transferred by the transcarboxylase to acetyl-CoA to form malonyl-CoA. The chain is Acetyl-coenzyme A carboxylase carboxyl transferase subunit beta from Trichormus variabilis (strain ATCC 29413 / PCC 7937) (Anabaena variabilis).